Reading from the N-terminus, the 200-residue chain is NADH-ubiquinone oxidoreductase 21.3 kDa subunit (200 aa).

A run of 3 helical transmembrane segments spans residues 16 to 36 (IKSG…MASL), 48 to 68 (MHVF…GGIY), and 105 to 125 (FPVI…FAFS).

In terms of assembly, complex I is composed of about 40 different subunits.

Its subcellular location is the mitochondrion inner membrane. The enzyme catalyses a ubiquinone + NADH + 5 H(+)(in) = a ubiquinol + NAD(+) + 4 H(+)(out). Functionally, transfer of electrons from NADH to the respiratory chain. The immediate electron acceptor for the enzyme is believed to be ubiquinone. This is NADH-ubiquinone oxidoreductase 21.3 kDa subunit from Neurospora crassa (strain ATCC 24698 / 74-OR23-1A / CBS 708.71 / DSM 1257 / FGSC 987).